The following is a 497-amino-acid chain: Galactose/methyl galactoside import ATP-binding protein MglA 1 (497 aa).

ABC transporter domains are found at residues 6-243 (LEMR…VGRD) and 256-494 (GKVR…VMSM). Residue 38–45 (GENGAGKS) participates in ATP binding.

This sequence belongs to the ABC transporter superfamily. Galactose/methyl galactoside importer (TC 3.A.1.2.3) family. The complex is composed of one ATP-binding protein (MglA), two transmembrane proteins (MglC) and a solute-binding protein (MglB).

Its subcellular location is the cell inner membrane. The catalysed reaction is D-galactose(out) + ATP + H2O = D-galactose(in) + ADP + phosphate + H(+). The enzyme catalyses methyl beta-D-galactoside(out) + ATP + H2O = methyl beta-D-galactoside(in) + ADP + phosphate + H(+). Part of the ABC transporter complex MglABC involved in galactose/methyl galactoside import. Responsible for energy coupling to the transport system. The chain is Galactose/methyl galactoside import ATP-binding protein MglA 1 from Photobacterium profundum (strain SS9).